The chain runs to 321 residues: Calcium-regulated beta-propeller protein CarP (321 aa).

An N-terminal signal peptide occupies residues 1-42 (MTIHAQTPEPFSMSRAFTPRRLLLAVLLVALSALVLLGQSFR).

Belongs to the YjiK family.

Its subcellular location is the cell inner membrane. Its function is as follows. Plays a role in intracellular Ca(2+) homeostasis. Involved in modulating Ca(2+)-induced swarming motility and pyocyanine production. Plays a role in regulating virulence in a Ca(2+)-dependent manner. Involved in cell protection against oxidative stress in the presence of elevated Ca(2+). This is Calcium-regulated beta-propeller protein CarP from Pseudomonas aeruginosa (strain ATCC 15692 / DSM 22644 / CIP 104116 / JCM 14847 / LMG 12228 / 1C / PRS 101 / PAO1).